Consider the following 1225-residue polypeptide: MSKVKATAEKCQLNISRIQSLLSQLEKVNAESLLFDTDNTRYVTAKIFHLAQTQEKTRKEMTAKGSTGIEVILCTLENTRDLQTILNILNILNELASTAGGRRINALISKGGARILLQLLLSASKESPSNEELMIVLHSLLAKLGPKDKKFGVKARVSGALNISLNLVKQNLQNPRLILPCLQVLRVCCMNSVNSAYLGKNGAVEILFKIIGPFTRRNTGLIKVSLDTLAALLKSRTNARKAVDRAYVQTLISTYMDWHRHDTRHRHMLIRKGILQCLKSITNIKIGRKAFIDANGMKTLYNTSQECQAVRTLDPLVNTSSLIMRKCFPKNRLPLPTIKSAFQFQLPFMPTSGPVALLYSMPPEVDDVVDESDDNEDTDAETEAEAENEDSDQICKNDDIETDITKLIPGQELGRTLEDLKMYERFFPELTEDFQEFDLVSNEPKPGAKLGPIIVPTAGEEQPEVPNNFMKNLARRSCNISLEDESNQRPTFLDMSKNVTNKGNSLDQKVHVDKDGSCYYYSNDIVRDLEKLSLHKASGNHPCRNGCVSAKDKPNFLPHPCNKSTSSSISCSNSLFEKHSMHLGPLCCSGIAPDDDESSPLDEQVMREMTDFDSILPLHDPDLYIEIVKNTKSVPEYTEVAYPDYFGHVPPFFKERLLERPYGVQRSKIFQDIERMIHPNDIIDRVIYDLDNPSCSAHDEIDILKFNSKFESGNLRKVIQIRKNEYDLILNSDINSNHYHQWFYFEVSGMRTGVAYRFNIINCEKSNSQFNYGMQPLMYSVQEALASRPWWYRVGTDICYYKNHFSRSSLATGGQKGKSYYTITFTVTFPHKDDVCYFAYHYPYTYSTLKMHLQKLESLHSPQQIYFRQEVLCETLGGNGCPVITITAMPESNYYEHVYQFRNRPYIFLTSRVHPGETNASWVMKGTLEFLMGSSATAQSLRESYIFKIVPMLNPDGVINGNHRCSLSGEDLNRQWQNPNSDLHPTIYHTKGLLQYLSAIKRVPLVYCDYHGHSRKKNVFMYGCSIKETVWHTNANAASCDMVEESGYKTLPKVLNQIAPAFSMSSCSFVVEKSKESTARVVVWKEIGVQRSYTMESTLCGCDQGKYKDLQIGTKELEEMGAKFCVGLLRLKRLTSPMELTLPPSLIDIENELIESSCKVASPTTYVLEDDEPRFIEEVDYSAESNDDVDPDLPENIGDFETSTLEEESFSDSEITRTHMSGQST.

A compositionally biased stretch (acidic residues) spans 366-392 (DDVVDESDDNEDTDAETEAEAENEDSD). The tract at residues 366–398 (DDVVDESDDNEDTDAETEAEAENEDSDQICKND) is disordered. The Peptidase M14 domain occupies 842–1132 (YPYTYSTLKM…KFCVGLLRLK (291 aa)). His-914, Glu-917, and His-1011 together coordinate Zn(2+). Glu-1096 (proton donor/acceptor) is an active-site residue. The segment covering 1181-1193 (YSAESNDDVDPDL) has biased composition (acidic residues). The interval 1181-1225 (YSAESNDDVDPDLPENIGDFETSTLEEESFSDSEITRTHMSGQST) is disordered.

This sequence belongs to the peptidase M14 family. It depends on Zn(2+) as a cofactor.

The protein localises to the cytoplasm. The protein resides in the cytosol. It is found in the nucleus. It localises to the mitochondrion. It catalyses the reaction (L-glutamyl)(n+1)-gamma-L-glutamyl-L-glutamyl-[protein] + H2O = (L-glutamyl)(n)-gamma-L-glutamyl-L-glutamyl-[protein] + L-glutamate. It carries out the reaction C-terminal L-alpha-aminoacyl-L-glutamyl-L-glutamyl-[tubulin] + H2O = C-terminal L-alpha-aminoacyl-L-glutamyl-[tubulin] + L-glutamate. In terms of biological role, metallocarboxypeptidase that mediates protein deglutamylation of tubulin and non-tubulin target proteins. Catalyzes the removal of polyglutamate side chains present on the gamma-carboxyl group of glutamate residues within the C-terminal tail of alpha- and beta-tubulin. Specifically cleaves tubulin long-side-chains, while it is not able to remove the branching point glutamate. Also catalyzes the removal of polyglutamate residues from the carboxy-terminus of alpha-tubulin as well as non-tubulin proteins. This chain is Cytosolic carboxypeptidase 1 (agtpbp1), found in Xenopus laevis (African clawed frog).